An 857-amino-acid polypeptide reads, in one-letter code: Mitogen-activated protein kinase kinase kinase dlk-1 (857 aa).

Residues 62-304 (ISNLEWLGSG…FSHIRQHWEI (243 aa)) form the Protein kinase domain. ATP-binding positions include 68–76 (LGSGSQGAV) and Lys89. The active-site Proton acceptor is the Asp173. 4 disordered regions span residues 441–503 (EEMS…ISRN), 572–625 (RIAS…PSRN), 733–775 (NAND…MESE), and 818–857 (HSIKTHRRTSSNPQAIIHQRIEEYSSSATEDSDDAGAVRI). Low complexity predominate over residues 467–488 (SSGAQSSPFSRQSSCRSSAGQQ). The span at 609–623 (APRSSSKLNRSSYPS) shows a compositional bias: polar residues. Acidic residues predominate over residues 753–762 (ADVESSEDEG). Over residues 763 to 772 (NGNNILNTSM) the composition is skewed to polar residues.

This sequence belongs to the protein kinase superfamily. STE Ser/Thr protein kinase family. MAP kinase kinase kinase subfamily. It depends on Mg(2+) as a cofactor. Post-translationally, ubiquitinated by rpm-1. Negatively regulated by ubiquitination by fsn-1 bound rpm-1, followed by degradation.

The protein localises to the synapse. It carries out the reaction L-seryl-[protein] + ATP = O-phospho-L-seryl-[protein] + ADP + H(+). The enzyme catalyses L-threonyl-[protein] + ATP = O-phospho-L-threonyl-[protein] + ADP + H(+). Functionally, component of a MAP kinase pathway that functions presynaptically to regulate synaptic architecture and presynaptic differentiation. Phosphorylates and activates mkk-4. The polypeptide is Mitogen-activated protein kinase kinase kinase dlk-1 (Caenorhabditis briggsae).